A 421-amino-acid polypeptide reads, in one-letter code: Testin (421 aa).

The PET domain occupies 92-199; the sequence is MILTNPVAAK…GDVKLPCEMD (108 aa). The segment at 133-164 is disordered; that stretch reads EKQPVAGSEGAQYRKKQLAKQLPAHDQDPSKC. Residues 155-164 show a composition bias toward basic and acidic residues; sequence PAHDQDPSKC. 3 LIM zinc-binding domains span residues 234–297, 299–359, and 362–421; these read YSCY…CDSE, PRCA…NHAV, and QGCH…KMMS.

The protein belongs to the prickle / espinas / testin family. As to quaternary structure, interacts via LIM domain 1 with ZYX. Interacts (via LIM domain 3) with ENAH and VASP. Interacts with ALKBH4, talin, actin, alpha-actinin, GRIP1 and PXN. Interacts (via LIM domain 2) with ACTL7A (via N-terminus). Heterodimer with ACTL7A; the heterodimer interacts with ENAH to form a heterotrimer.

It localises to the cytoplasm. The protein localises to the cell junction. The protein resides in the focal adhesion. Its function is as follows. Scaffold protein that may play a role in cell adhesion, cell spreading and in the reorganization of the actin cytoskeleton. Plays a role in the regulation of cell proliferation. May act as a tumor suppressor. This is Testin (TES) from Ateles geoffroyi (Black-handed spider monkey).